A 1500-amino-acid chain; its full sequence is Carbamoyl-phosphate synthase [ammonia], mitochondrial (1500 aa).

The transit peptide at 1–38 (MTRILTAFKVVRTLKTGFGFTNVTAHQKWKFSRPGIRL) directs the protein to the mitochondrion. Positions 39–218 (LSVKAQTAHI…VKVYGKGNPT (180 aa)) are anthranilate phosphoribosyltransferase homolog. N6-acetyllysine; alternate occurs at positions 55, 57, and 119. Lys55 is subject to N6-glutaryllysine; alternate. An N6-succinyllysine; alternate mark is found at Lys55, Lys57, and Lys119. Ser148 carries the phosphoserine modification. N6-acetyllysine; alternate is present on residues Lys157 and Lys171. At Lys157 the chain carries N6-succinyllysine; alternate. At Lys171 the chain carries N6-glutaryllysine; alternate. Position 176 is an N6-glutaryllysine (Lys176). Residues Lys182 and Lys197 each carry the N6-acetyllysine modification. An N6-acetyllysine; alternate mark is found at Lys207, Lys210, Lys214, Lys219, and Lys228. An N6-glutaryllysine; alternate mark is found at Lys207, Lys210, Lys214, Lys219, and Lys228. The residue at position 207 (Lys207) is an N6-succinyllysine; alternate. Lys214 carries the N6-succinyllysine; alternate modification. Positions 219-404 (KVVAVDCGIK…FSLIKKGKAT (186 aa)) constitute a Glutamine amidotransferase type-1 domain. Lys237 carries the N6-glutaryllysine modification. N6-acetyllysine; alternate is present on residues Lys280, Lys287, Lys307, and Lys310. The residue at position 280 (Lys280) is an N6-glutaryllysine; alternate. Residues Lys287 and Lys307 each carry the N6-succinyllysine; alternate modification. 2 positions are modified to N6-glutaryllysine; alternate: Lys307 and Lys310. Lys400 bears the N6-succinyllysine mark. 4 positions are modified to N6-glutaryllysine; alternate: Lys402, Lys412, Lys453, and Lys458. An N6-succinyllysine; alternate mark is found at Lys402 and Lys412. An N6-acetyllysine; alternate mark is found at Lys412, Lys453, Lys458, Lys522, Lys527, and Lys532. N6-succinyllysine; alternate occurs at positions 458, 522, and 527. 2 positions are modified to N6-glutaryllysine; alternate: Lys527 and Lys532. Ser537 bears the Phosphoserine; alternate mark. The O-linked (GlcNAc) serine; alternate glycan is linked to Ser537. Ser540 is subject to Phosphoserine. In terms of domain architecture, ATP-grasp 1 spans 551 to 743 (SDKLNEINEK…LAFIAAKIAL (193 aa)). N6-acetyllysine; alternate occurs at positions 553 and 560. At Lys553 the chain carries N6-glutaryllysine; alternate. 2 positions are modified to N6-succinyllysine; alternate: Lys553 and Lys560. At Ser569 the chain carries Phosphoserine. N6-acetyllysine; alternate occurs at positions 575 and 612. Residues Lys575 and Lys612 each carry the N6-succinyllysine; alternate modification. An N6-acetyllysine modification is found at Lys630. Position 728 is an N6-glutaryllysine (Lys728). Lys751, Lys757, Lys772, Lys793, Lys811, and Lys831 each carry N6-acetyllysine; alternate. N6-succinyllysine; alternate occurs at positions 751 and 757. N6-glutaryllysine; alternate is present on residues Lys757, Lys772, Lys793, and Lys811. Lys793 carries the post-translational modification N6-succinyllysine; alternate. Lys831 bears the N6-succinyllysine; alternate mark. Ser835 carries the phosphoserine modification. N6-acetyllysine; alternate occurs at positions 841 and 856. Residues Lys841 and Lys856 each carry the N6-glutaryllysine; alternate modification. Lys869 carries the N6-glutaryllysine modification. N6-acetyllysine; alternate is present on residues Lys875, Lys889, and Lys892. Lys875, Lys889, and Lys892 each carry N6-glutaryllysine; alternate. Lys875, Lys889, and Lys892 each carry N6-succinyllysine; alternate. 2 positions are modified to phosphoserine: Ser896 and Ser898. Lys905 carries the N6-glutaryllysine modification. 3 positions are modified to N6-acetyllysine; alternate: Lys908, Lys915, and Lys919. N6-glutaryllysine; alternate is present on residues Lys908, Lys915, and Lys919. Residues Lys915 and Lys919 each carry the N6-succinyllysine; alternate modification. Lys935 carries the N6-acetyllysine modification. Ser1036 is modified (phosphoserine). An N6-acetyllysine; alternate modification is found at Lys1074. Position 1074 is an N6-glutaryllysine; alternate (Lys1074). Residue Lys1074 is modified to N6-succinyllysine; alternate. Phosphoserine occurs at positions 1079, 1090, and 1093. The ATP-grasp 2 domain occupies 1093–1284 (SAVLDELKVA…FIDVATKVMI (192 aa)). Lys1100 is subject to N6-acetyllysine; alternate. Residue Lys1100 is modified to N6-succinyllysine; alternate. Lys1149 bears the N6-succinyllysine mark. The residue at position 1150 (Lys1150) is an N6-glutaryllysine. 2 positions are modified to N6-acetyllysine; alternate: Lys1168 and Lys1183. Lys1168 and Lys1183 each carry N6-glutaryllysine; alternate. N6-succinyllysine; alternate occurs at positions 1168 and 1183. Position 1203 is a phosphoserine (Ser1203). Lys1222 bears the N6-acetyllysine mark. At Lys1224 the chain carries N6-glutaryllysine. An N6-acetyllysine; alternate mark is found at Lys1232, Lys1269, and Lys1291. N6-succinyllysine; alternate is present on residues Lys1232, Lys1269, and Lys1291. Residue Ser1331 is glycosylated (O-linked (GlcNAc) serine). O-linked (GlcNAc) threonine glycosylation occurs at Thr1332. Residues 1355–1500 (FKIPQKGILI…YRQYSAGKAA (146 aa)) form the MGS-like domain. Lys1356 carries the N6-acetyllysine; alternate modification. N6-glutaryllysine; alternate occurs at positions 1356 and 1360. An N6-succinyllysine; alternate mark is found at Lys1356 and Lys1360. 3 residues coordinate N-acetyl-L-glutamate: Thr1391, Thr1394, and Trp1410. A phosphoserine mark is found at Ser1419 and Ser1431. Residues Asn1437 and Asn1440 each contribute to the N-acetyl-L-glutamate site. Lys1444 carries the post-translational modification N6-acetyllysine; alternate. Lys1444 is subject to N6-succinyllysine; alternate. Asn1449 lines the N-acetyl-L-glutamate pocket. N6-acetyllysine; alternate is present on residues Lys1471, Lys1479, and Lys1486. 3 positions are modified to N6-succinyllysine; alternate: Lys1471, Lys1479, and Lys1486. An N6-glutaryllysine; alternate mark is found at Lys1479 and Lys1486.

In terms of assembly, can form homooligomers (monomers as predominant form and dimers). Post-translationally, undergoes proteolytic cleavage in the C-terminal region corresponding to the loss of approximately 12 AA residues from the C-terminus. Succinylated at Lys-287 and Lys-1291. Desuccinylated at Lys-1291 by SIRT5, leading to activation. In terms of processing, glutarylated. Glutarylation levels increase during fasting. Deglutarylated by SIRT5 at Lys-55, Lys-219, Lys-412, Lys-889, Lys-892, Lys-915, Lys-1360 and Lys-1486, leading to activation. Primarily in the liver and small intestine.

The protein localises to the mitochondrion. The protein resides in the nucleus. It is found in the nucleolus. Its subcellular location is the cell membrane. It carries out the reaction hydrogencarbonate + NH4(+) + 2 ATP = carbamoyl phosphate + 2 ADP + phosphate + 2 H(+). With respect to regulation, requires N-acetyl-L-glutamate (NAG) as an allosteric activator. Activated by glycerol in the absence of NAG, whereas in the presence of NAG it is inhibited by increasing concentrations of glycerol. Functionally, involved in the urea cycle of ureotelic animals where the enzyme plays an important role in removing excess ammonia from the cell. This Homo sapiens (Human) protein is Carbamoyl-phosphate synthase [ammonia], mitochondrial (CPS1).